Consider the following 319-residue polypeptide: Chromoplast-specific carotenoid-associated protein C1, chromoplastic (319 aa).

The transit peptide at 1–55 (MTSIAFWNAFTVNPFPAAARRSPPPLTPFTSGALSPARKPRILEISHPRTLPSFR) directs the protein to the chromoplast.

This sequence belongs to the PAP/fibrillin family. In terms of tissue distribution, expressed in flower buds and floral lip tissues. Not detected in roots and leaves. Specifically expressed in conical papillate cells of adaxial epidermis of lip tissues.

The protein localises to the plastid. It is found in the chromoplast. Its function is as follows. May be involved in carotenoid sequestration within chromoplasts. The polypeptide is Chromoplast-specific carotenoid-associated protein C1, chromoplastic (CHRC1) (Oncidium hybrid cultivar (Orchid)).